The primary structure comprises 448 residues: uncharacterized protein (448 aa).

Lys-297 is subject to N6-(pyridoxal phosphate)lysine.

This sequence belongs to the class-III pyridoxal-phosphate-dependent aminotransferase family. Pyridoxal 5'-phosphate serves as cofactor.

This is an uncharacterized protein from Sinorhizobium fredii (strain NBRC 101917 / NGR234).